Consider the following 550-residue polypeptide: Mitochondrial distribution and morphology protein 12 (550 aa).

Residues 1–550 (MSIDLNWETV…VYPSYWTFLV (550 aa)) form the SMP-LTD domain. Disordered stretches follow at residues 76–97 (SDLASESGSEEDEEEIADDRRR), 196–386 (GHGH…KLRE), and 466–489 (ENEVDGGEGDKQTGFKSPPGGGNG). The span at 83–92 (GSEEDEEEIA) shows a compositional bias: acidic residues. The span at 270-286 (PPFPPSSTGGPSPPPGL) shows a compositional bias: pro residues. The segment covering 288–305 (KPHHPHHPHHHHAHHAHP) has biased composition (basic residues). A compositionally biased stretch (basic and acidic residues) spans 327–344 (PTRDKTTPSHHPDPEDVH). A compositionally biased stretch (polar residues) spans 346 to 355 (PNTTTTNKQR). Residues 356–371 (STSPATSSPLATSAQE) are compositionally biased toward low complexity.

Belongs to the MDM12 family. In terms of assembly, component of the ER-mitochondria encounter structure (ERMES) or MDM complex, composed of MMM1, MDM10, MDM12 and MDM34. An MMM1 homodimer associates with one molecule of MDM12 on each side in a pairwise head-to-tail manner, and the SMP-LTD domains of MMM1 and MDM12 generate a continuous hydrophobic tunnel for phospholipid trafficking.

Its subcellular location is the mitochondrion outer membrane. It localises to the endoplasmic reticulum membrane. Functionally, component of the ERMES/MDM complex, which serves as a molecular tether to connect the endoplasmic reticulum (ER) and mitochondria. Components of this complex are involved in the control of mitochondrial shape and protein biogenesis, and function in nonvesicular lipid trafficking between the ER and mitochondria. MDM12 is required for the interaction of the ER-resident membrane protein MMM1 and the outer mitochondrial membrane-resident beta-barrel protein MDM10. The MDM12-MMM1 subcomplex functions in the major beta-barrel assembly pathway that is responsible for biogenesis of all mitochondrial outer membrane beta-barrel proteins, and acts in a late step after the SAM complex. The MDM10-MDM12-MMM1 subcomplex further acts in the TOM40-specific pathway after the action of the MDM12-MMM1 complex. Essential for establishing and maintaining the structure of mitochondria and maintenance of mtDNA nucleoids. In Podospora anserina (strain S / ATCC MYA-4624 / DSM 980 / FGSC 10383) (Pleurage anserina), this protein is Mitochondrial distribution and morphology protein 12.